A 489-amino-acid polypeptide reads, in one-letter code: GTPase Der (489 aa).

EngA-type G domains follow at residues 3–166 and 200–373; these read PVVA…AEAM and IKLA…ESAT. Residues 9 to 16, 56 to 60, 118 to 121, 206 to 213, 253 to 257, and 318 to 321 each bind GTP; these read GRPNVGKS, DTGGI, NKVD, GKPNVGKS, DTAGV, and NKWD. Positions 374-458 constitute a KH-like domain; that stretch reads RRVSTSMLTR…PIQVRFQEGG (85 aa).

Belongs to the TRAFAC class TrmE-Era-EngA-EngB-Septin-like GTPase superfamily. EngA (Der) GTPase family. Associates with the 50S ribosomal subunit.

Its function is as follows. GTPase that plays an essential role in the late steps of ribosome biogenesis. The chain is GTPase Der from Shewanella loihica (strain ATCC BAA-1088 / PV-4).